Here is a 429-residue protein sequence, read N- to C-terminus: Dihydroorotase (429 aa).

2 residues coordinate Zn(2+): His-61 and His-63. Substrate is bound by residues 63–65 (HYR) and Asn-95. Zn(2+) is bound by residues Asp-153, His-180, and His-233. A substrate-binding site is contributed by Asn-279. A Zn(2+)-binding site is contributed by Asp-306. The active site involves Asp-306. Substrate contacts are provided by residues His-310 and 324-325 (FG).

It belongs to the metallo-dependent hydrolases superfamily. DHOase family. Class I DHOase subfamily. It depends on Zn(2+) as a cofactor.

The enzyme catalyses (S)-dihydroorotate + H2O = N-carbamoyl-L-aspartate + H(+). Its pathway is pyrimidine metabolism; UMP biosynthesis via de novo pathway; (S)-dihydroorotate from bicarbonate: step 3/3. In terms of biological role, catalyzes the reversible cyclization of carbamoyl aspartate to dihydroorotate. The sequence is that of Dihydroorotase from Ligilactobacillus salivarius (strain UCC118) (Lactobacillus salivarius).